The chain runs to 388 residues: Fibrinogen- and Ig-binding protein (388 aa).

Residues 1–41 form the signal peptide; sequence MSKTNPNKLYSLRKLKTGTASVAVDLTVLGTGLANTTDVKA. 4 D repeats span residues 288-293, 294-299, 302-307, and 309-314; these read EKLEAE, AKALKE, AKQAEE, and AKLKAD. Residues 308–362 are disordered; sequence LAKLKADKASGAQKPDTKPGNKEVPTRPSQTRTNTNKAPMAQTKRQLPSTGEETT. Over residues 322 to 332 the composition is skewed to basic and acidic residues; sequence PDTKPGNKEVP. Polar residues predominate over residues 334–362; that stretch reads RPSQTRTNTNKAPMAQTKRQLPSTGEETT. Residues 354–358 carry the LPXTG sorting signal motif; the sequence is LPSTG. A Pentaglycyl murein peptidoglycan amidated threonine modification is found at Thr-357. The propeptide at 358 to 388 is removed by sortase; sequence GEETTNPFFTAAALTVIASAGVLALKRKEEN.

Its subcellular location is the secreted. The protein resides in the cell wall. In terms of biological role, binds IgG molecules of the Ig1, Ig2 and Ig4 subclasses, and also binds fibrinogen. This is Fibrinogen- and Ig-binding protein (mrp4) from Streptococcus pyogenes.